Here is an 817-residue protein sequence, read N- to C-terminus: LisH domain-containing protein ARMC9 (817 aa).

The LisH domain maps to S15–G47. Disordered stretches follow at residues S580–V605, L610–L629, and K642–K817. A compositionally biased stretch (acidic residues) spans Q586–V605. Composition is skewed to polar residues over residues S692 to T715 and G740 to S750. The span at G805–K817 shows a compositional bias: low complexity.

In terms of tissue distribution, expressed in multiple CNS regions, including the cerebellum, all periventricular regions, and all layers of the retina.

It is found in the cytoplasm. The protein localises to the cytoskeleton. Its subcellular location is the cilium basal body. The protein resides in the cell projection. It localises to the cilium. It is found in the microtubule organizing center. The protein localises to the centrosome. Its subcellular location is the centriole. In terms of biological role, involved in ciliogenesis. It is required for appropriate acetylation and polyglutamylation of ciliary microtubules, and regulation of cilium length. Acts as a positive regulator of hedgehog (Hh) signaling. This chain is LisH domain-containing protein ARMC9 (armc9), found in Danio rerio (Zebrafish).